Here is a 34-residue protein sequence, read N- to C-terminus: Crassicorin-II (34 aa).

Cysteines 6 and 30 form a disulfide.

Highly expressed by the mesenteries. Moderately expressed by the pharynx. Weakly expressed by the gonad and pedal disk. No expression in tentacle.

It is found in the secreted. The protein resides in the nematocyst. Peptide with both antimicrobial and neurotoxin activities. Cationic AMP with antimicrobial activity against both Gram-positive bacteria (B.subtilis) and Gram-negative bacteria (E.coli and S.enterica). Shows no significant antimicrobial activity against bacteria S.aureus and P.aeruginosa, as well as the fungus C.albicans. In vivo, induces reversible paralytic activity towards the shrimp P.paucidens. May act by impairing sodium or potassium channels in the prey. The polypeptide is Crassicorin-II (Urticina crassicornis (Mottled anemone)).